The following is a 413-amino-acid chain: Phosphopentomutase (413 aa).

Mn(2+)-binding residues include Asp-11, Asp-306, His-311, Asp-347, His-348, and His-359.

It belongs to the phosphopentomutase family. Mn(2+) is required as a cofactor.

Its subcellular location is the cytoplasm. The enzyme catalyses 2-deoxy-alpha-D-ribose 1-phosphate = 2-deoxy-D-ribose 5-phosphate. It carries out the reaction alpha-D-ribose 1-phosphate = D-ribose 5-phosphate. It functions in the pathway carbohydrate degradation; 2-deoxy-D-ribose 1-phosphate degradation; D-glyceraldehyde 3-phosphate and acetaldehyde from 2-deoxy-alpha-D-ribose 1-phosphate: step 1/2. Functionally, isomerase that catalyzes the conversion of deoxy-ribose 1-phosphate (dRib-1-P) and ribose 1-phosphate (Rib-1-P) to deoxy-ribose 5-phosphate (dRib-5-P) and ribose 5-phosphate (Rib-5-P), respectively. The chain is Phosphopentomutase from Helicobacter pylori (strain Shi470).